The following is a 61-amino-acid chain: uncharacterized protein (61 aa).

The protein localises to the mitochondrion. This is an uncharacterized protein from Marchantia polymorpha (Common liverwort).